Consider the following 835-residue polypeptide: Phenylalanine--tRNA ligase beta subunit (835 aa).

The tRNA-binding domain maps to G44 to L158. The 80-residue stretch at W414 to S493 folds into the B5 domain. Mg(2+)-binding residues include D471, D477, E480, and E481. The region spanning S741–R834 is the FDX-ACB domain.

It belongs to the phenylalanyl-tRNA synthetase beta subunit family. Type 1 subfamily. As to quaternary structure, tetramer of two alpha and two beta subunits. Requires Mg(2+) as cofactor.

It localises to the cytoplasm. The catalysed reaction is tRNA(Phe) + L-phenylalanine + ATP = L-phenylalanyl-tRNA(Phe) + AMP + diphosphate + H(+). The protein is Phenylalanine--tRNA ligase beta subunit of Mycobacterium leprae (strain TN).